Here is a 380-residue protein sequence, read N- to C-terminus: MPESAEAQVKEALLALLKDRDIQHITMKEIAEKAKVSRGSLYLYYEDKFSIIEDVIEDMKEGLGKALFDAFSHMDTLHLNKKRQTVHPTLSFVHEHRSFFSVMMNRGHFHRFFKDVFQQDVLLAPIHVNLTPIERDIYGHYRALYTYAIILYWLNEDAAASPEAISQKVWELVSQKRFYWLFGKAVPGEREKEKQIDRRVVRTREALQKAFLDVLAEKQDYAGITISDITRKSNIRRATFYDHYANKEELLQTMIQRSCAEIIDHLTIASSPNEFSLKEAEKALAILLSALSNMPIVHFLNREWGVPHVIPDMFKALESFYLHQQTDIHAEKKLYAHYVSAMIIGLLLYRLDEGKAHPPEVLAREFLQFLDVKKYKVVLL.

2 consecutive HTH tetR-type domains span residues Glu-3–Leu-63 and Val-201–Ile-262. Residues Thr-225 to Tyr-244 constitute a DNA-binding region (H-T-H motif).

This is an uncharacterized protein from Bacillus subtilis (strain 168).